Here is a 437-residue protein sequence, read N- to C-terminus: UDP-N-acetylmuramate--L-alanine ligase (437 aa).

An ATP-binding site is contributed by 108 to 114; the sequence is GAHGKTS.

This sequence belongs to the MurCDEF family.

It localises to the cytoplasm. The catalysed reaction is UDP-N-acetyl-alpha-D-muramate + L-alanine + ATP = UDP-N-acetyl-alpha-D-muramoyl-L-alanine + ADP + phosphate + H(+). Its pathway is cell wall biogenesis; peptidoglycan biosynthesis. Functionally, cell wall formation. The chain is UDP-N-acetylmuramate--L-alanine ligase from Staphylococcus aureus (strain COL).